The following is a 306-amino-acid chain: Pantothenate kinase (306 aa).

Residue 91–98 coordinates ATP; the sequence is GSVAVGKS.

The protein belongs to the prokaryotic pantothenate kinase family.

The protein localises to the cytoplasm. It catalyses the reaction (R)-pantothenate + ATP = (R)-4'-phosphopantothenate + ADP + H(+). It functions in the pathway cofactor biosynthesis; coenzyme A biosynthesis; CoA from (R)-pantothenate: step 1/5. The sequence is that of Pantothenate kinase from Streptococcus thermophilus (strain ATCC BAA-491 / LMD-9).